We begin with the raw amino-acid sequence, 453 residues long: UDP-N-acetylmuramoylalanine--D-glutamate ligase (453 aa).

117–123 (GANGKST) serves as a coordination point for ATP.

It belongs to the MurCDEF family.

It localises to the cytoplasm. It catalyses the reaction UDP-N-acetyl-alpha-D-muramoyl-L-alanine + D-glutamate + ATP = UDP-N-acetyl-alpha-D-muramoyl-L-alanyl-D-glutamate + ADP + phosphate + H(+). The protein operates within cell wall biogenesis; peptidoglycan biosynthesis. Its function is as follows. Cell wall formation. Catalyzes the addition of glutamate to the nucleotide precursor UDP-N-acetylmuramoyl-L-alanine (UMA). This chain is UDP-N-acetylmuramoylalanine--D-glutamate ligase, found in Methylobacillus flagellatus (strain ATCC 51484 / DSM 6875 / VKM B-1610 / KT).